Here is a 99-residue protein sequence, read N- to C-terminus: Co-chaperonin GroES (99 aa).

It belongs to the GroES chaperonin family. As to quaternary structure, heptamer of 7 subunits arranged in a ring. Interacts with the chaperonin GroEL.

It localises to the cytoplasm. Functionally, together with the chaperonin GroEL, plays an essential role in assisting protein folding. The GroEL-GroES system forms a nano-cage that allows encapsulation of the non-native substrate proteins and provides a physical environment optimized to promote and accelerate protein folding. GroES binds to the apical surface of the GroEL ring, thereby capping the opening of the GroEL channel. The sequence is that of Co-chaperonin GroES from Corynebacterium glutamicum (strain R).